The following is a 201-amino-acid chain: Interferon-induced transmembrane protein 10 (201 aa).

Disordered regions lie at residues 1 to 23 and 60 to 88; these read MAQG…DGTQ and AAPA…KTDS. Over 1-127 the chain is Extracellular; that stretch reads MAQGPSQCPA…PDTTEVNDYY (127 aa). Residues 63 to 73 show a composition bias toward pro residues; that stretch reads APEPSASPPMA. The helical transmembrane segment at 128-148 threads the bilayer; sequence LWSIFNFVYLNFCCLGFIALA. 2 S-palmitoyl cysteine lipidation sites follow: C140 and C141. The Cytoplasmic portion of the chain corresponds to 149 to 173; the sequence is YSLKVRDKKLLNDLNGAVEDAKTAR. Residues 174-194 traverse the membrane as a helical segment; it reads LFNITSSALAASCIILIFIFL. Residues 195 to 201 are Extracellular-facing; that stretch reads RYPLTDY.

Belongs to the CD225/Dispanin family.

Its subcellular location is the cell membrane. This Mus musculus (Mouse) protein is Interferon-induced transmembrane protein 10 (Ifitm10).